Consider the following 480-residue polypeptide: MKVFYVTAECWPFAKTGGLGDVSYALPKELKKEGVDVRVIMPKYSTIPSYLKDQLKEIAVFSVRVGWRNQYCGLLEMELDGVKFYFIDNEFYFRREDERKSIYGYGDDAERYTFFTDAVLEAISRIDFYPDVIHINDWHTGMLPLILKERYATLEGYKNIKTMYTIHNLQYQGVFDKHVLYDILDLPQKYFDNGDIEYYGSINFMKAGINFADKIITVSPTYANEIQTSFYGEQLDGLLRKESGKLKGILNGIDYDLNDPAKDKDIFVHYDVDSINKKVENKLRLQDILGLKKDSSIPLIGIVSRLVSQKGFDLIAYMMPELMREDLQIVVLGTGEHQYQSMFNYYDSNFSDKVSARITFNASLAQQIYAASDMFLMPSLFEPCGIGQMLAMRYGSLPIVRETGGLRDTVTPYNKFTGEGNGFSFKNYNAHEMFFCLKNAIKVFKDKEKWIKLVENAMKTDNSWKKSAKEYIETYRDICD.

K15 contributes to the ADP-alpha-D-glucose binding site.

It belongs to the glycosyltransferase 1 family. Bacterial/plant glycogen synthase subfamily.

It catalyses the reaction [(1-&gt;4)-alpha-D-glucosyl](n) + ADP-alpha-D-glucose = [(1-&gt;4)-alpha-D-glucosyl](n+1) + ADP + H(+). The protein operates within glycan biosynthesis; glycogen biosynthesis. In terms of biological role, synthesizes alpha-1,4-glucan chains using ADP-glucose. This is Glycogen synthase from Clostridioides difficile (strain 630) (Peptoclostridium difficile).